Reading from the N-terminus, the 306-residue chain is Agmatinase (306 aa).

Mn(2+)-binding residues include His126, Asp149, His151, Asp153, Asp230, and Asp232.

Belongs to the arginase family. Agmatinase subfamily. Mn(2+) serves as cofactor.

It carries out the reaction agmatine + H2O = urea + putrescine. The protein operates within amine and polyamine biosynthesis; putrescine biosynthesis via agmatine pathway; putrescine from agmatine: step 1/1. Catalyzes the formation of putrescine from agmatine. This is Agmatinase from Shigella dysenteriae serotype 1 (strain Sd197).